Reading from the N-terminus, the 253-residue chain is Small ribosomal subunit protein uS2 (253 aa).

The interval 226 to 253 is disordered; sequence QGADNADVEKELSESVEENSAEEVDDAE. Residues 239-253 show a composition bias toward acidic residues; it reads ESVEENSAEEVDDAE.

The protein belongs to the universal ribosomal protein uS2 family.

This is Small ribosomal subunit protein uS2 from Lactobacillus delbrueckii subsp. bulgaricus (strain ATCC 11842 / DSM 20081 / BCRC 10696 / JCM 1002 / NBRC 13953 / NCIMB 11778 / NCTC 12712 / WDCM 00102 / Lb 14).